Here is a 460-residue protein sequence, read N- to C-terminus: GTPase Der (460 aa).

EngA-type G domains lie at Phe-3–Thr-167 and Ile-189–Asn-364. GTP contacts are provided by residues Gly-9–Ser-16, Asp-56–Leu-60, Asn-119–Glu-122, Gly-195–Ser-202, Asp-242–Leu-246, and Asn-307–Asp-310. The KH-like domain occupies Arg-365–Ala-449.

This sequence belongs to the TRAFAC class TrmE-Era-EngA-EngB-Septin-like GTPase superfamily. EngA (Der) GTPase family. As to quaternary structure, associates with the 50S ribosomal subunit.

Functionally, GTPase that plays an essential role in the late steps of ribosome biogenesis. The sequence is that of GTPase Der from Nitrobacter hamburgensis (strain DSM 10229 / NCIMB 13809 / X14).